The primary structure comprises 223 residues: ATP synthase subunit a 1 (223 aa).

The next 5 membrane-spanning stretches (helical) occupy residues 20–40 (LTIA…AFAS), 78–98 (YLPY…CTII), 108–128 (LSTT…FGIA), 174–194 (MILA…MSVL), and 196–216 (LLTG…YISA).

Belongs to the ATPase A chain family. In terms of assembly, F-type ATPases have 2 components, CF(1) - the catalytic core - and CF(0) - the membrane proton channel. CF(1) has five subunits: alpha(3), beta(3), gamma(1), delta(1), epsilon(1). CF(0) has four main subunits: a, b, b' and c.

The protein resides in the cell inner membrane. Its function is as follows. Key component of the proton channel; it plays a direct role in the translocation of protons across the membrane. In Chlorobium luteolum (strain DSM 273 / BCRC 81028 / 2530) (Pelodictyon luteolum), this protein is ATP synthase subunit a 1.